A 464-amino-acid chain; its full sequence is Potassium/proton antiporter CemA (464 aa).

5 consecutive transmembrane segments (helical) span residues 36 to 56 (FSLSLWGILKYSGIYFCTEIL), 241 to 261 (ASVSLQYVGFLLFLFPIQIAI), 341 to 361 (LLLRLATNAISIATLFPLLIF), 389 to 409 (ILLLTDLCVGFHSPHGWEILV), and 425 to 445 (TPCFVSTFPVILDTLFKYWIF).

The protein belongs to the CemA family.

The protein resides in the plastid. Its subcellular location is the chloroplast inner membrane. It carries out the reaction K(+)(in) + H(+)(out) = K(+)(out) + H(+)(in). In terms of biological role, contributes to K(+)/H(+) antiport activity by supporting proton efflux to control proton extrusion and homeostasis in chloroplasts in a light-dependent manner to modulate photosynthesis. Prevents excessive induction of non-photochemical quenching (NPQ) under continuous-light conditions. Indirectly promotes efficient inorganic carbon uptake into chloroplasts. The polypeptide is Potassium/proton antiporter CemA (Adiantum capillus-veneris (Maidenhair fern)).